A 55-amino-acid polypeptide reads, in one-letter code: Large ribosomal subunit protein bL33 (55 aa).

Belongs to the bacterial ribosomal protein bL33 family.

This Sodalis glossinidius (strain morsitans) protein is Large ribosomal subunit protein bL33.